Consider the following 468-residue polypeptide: PTS system mannitol-specific EIICB component (468 aa).

Residues 1-25 are Cytoplasmic-facing; the sequence is MNNQPSFRARVQKFGSFLSGMIMPN. A PTS EIIC type-2 domain is found at 14-344; sequence FGSFLSGMIM…ILKTSKATAE (331 aa). Residues 26 to 47 traverse the membrane as a helical segment; it reads IGAFIAWGLITALFIPTGWWPN. Topologically, residues 48–51 are extracellular; the sequence is EQLA. Residues 52–72 traverse the membrane as a helical segment; sequence ELVGPMITYLLPLLIGYTGGK. Residues 73-135 are Cytoplasmic-facing; the sequence is MIYDVRGGVV…SGFEMLVNNF (63 aa). The chain crosses the membrane as a helical span at residues 136–157; sequence SAGILAAILAIVAFLGIGPVVV. Topologically, residues 158–166 are extracellular; it reads SFSNVLASG. Residues 167–187 traverse the membrane as a helical segment; that stretch reads VEVIIGAGLLPLASIFIEPAK. The Cytoplasmic portion of the chain corresponds to 188–274; that stretch reads VLFLNNAINH…ILMKPTLILA (87 aa). Residues 275 to 294 traverse the membrane as a helical segment; sequence VIAGGMSGVFTFVLFNAGLV. The Extracellular segment spans residues 295–314; that stretch reads AVPSPGSIFALLAMTPRGEY. A helical transmembrane segment spans residues 315–336; sequence AGVLAGVIIATVVSFVIASIIL. The Cytoplasmic portion of the chain corresponds to 337–468; the sequence is KTSKATAEDL…YDELVNRLKS (132 aa). The 89-residue stretch at 380 to 468 folds into the PTS EIIB type-2 domain; it reads NKIIFACDAG…YDELVNRLKS (89 aa). Cysteine 386 acts as the Phosphocysteine intermediate; for EIIB activity in catalysis. Cysteine 386 carries the phosphocysteine; by EIIA modification.

In terms of assembly, homodimer.

It is found in the cell membrane. The catalysed reaction is D-mannitol(out) + N(pros)-phospho-L-histidyl-[protein] = D-mannitol 1-phosphate(in) + L-histidyl-[protein]. Its function is as follows. The phosphoenolpyruvate-dependent sugar phosphotransferase system (sugar PTS), a major carbohydrate active transport system, catalyzes the phosphorylation of incoming sugar substrates concomitantly with their translocation across the cell membrane. The enzyme II CmtAB PTS system is involved in D-mannitol transport. The sequence is that of PTS system mannitol-specific EIICB component (mtlA) from Halalkalibacterium halodurans (strain ATCC BAA-125 / DSM 18197 / FERM 7344 / JCM 9153 / C-125) (Bacillus halodurans).